The primary structure comprises 841 residues: Translation initiation factor IF-2 (841 aa).

Residues 94 to 258 (QRSPEEIEAE…HGFQSPTGPV (165 aa)) are disordered. Basic and acidic residues predominate over residues 96 to 136 (SPEEIEAERKRELEERRAVENAARQKAEEEAKRRAEEEARR). A compositionally biased stretch (low complexity) spans 137–173 (QPAAAQPAGTEAVAAPVAPVEAVREAAPVAAAPAPAA). Basic and acidic residues-rich tracts occupy residues 174 to 194 (DARK…DNNR), 200 to 217 (DGER…EKAP), and 225 to 234 (TTDEESDGFR). The segment covering 235–248 (RGGRGKAKLKKRNA) has biased composition (basic residues). In terms of domain architecture, tr-type G spans 341-510 (SRAPVVTVMG…LLQAEVLELK (170 aa)). Positions 350–357 (GHVDHGKT) are G1. 350–357 (GHVDHGKT) is a GTP binding site. The interval 375–379 (GITQH) is G2. The G3 stretch occupies residues 396–399 (DTPG). GTP contacts are provided by residues 396-400 (DTPGH) and 450-453 (NKID). The interval 450–453 (NKID) is G4. The interval 486–488 (SAK) is G5.

It belongs to the TRAFAC class translation factor GTPase superfamily. Classic translation factor GTPase family. IF-2 subfamily.

Its subcellular location is the cytoplasm. Functionally, one of the essential components for the initiation of protein synthesis. Protects formylmethionyl-tRNA from spontaneous hydrolysis and promotes its binding to the 30S ribosomal subunits. Also involved in the hydrolysis of GTP during the formation of the 70S ribosomal complex. The polypeptide is Translation initiation factor IF-2 (Pseudomonas fluorescens (strain SBW25)).